We begin with the raw amino-acid sequence, 71 residues long: Small ribosomal subunit protein bS21 (71 aa).

Residues alanine 49–lysine 59 are compositionally biased toward basic residues. Positions alanine 49–tyrosine 71 are disordered. Residues valine 60–tyrosine 71 are compositionally biased toward basic and acidic residues.

It belongs to the bacterial ribosomal protein bS21 family.

The polypeptide is Small ribosomal subunit protein bS21 (Stutzerimonas stutzeri (strain A1501) (Pseudomonas stutzeri)).